The primary structure comprises 117 residues: Small ribosomal subunit protein bS18c (117 aa).

The segment at 86 to 117 (SELTPRTNALKARNKNKQNKYQNNQTKFLSNF) is disordered.

Belongs to the bacterial ribosomal protein bS18 family. In terms of assembly, part of the 30S ribosomal subunit.

It is found in the plastid. This Cuscuta exaltata (Tall dodder) protein is Small ribosomal subunit protein bS18c.